We begin with the raw amino-acid sequence, 56 residues long: Large ribosomal subunit protein bL32 (56 aa).

A disordered region spans residues 1 to 37 (MAVQQNKKSRSRRDMRRSHDALTTAAISVDKASGEKH). Over residues 7 to 16 (KKSRSRRDMR) the composition is skewed to basic residues.

The protein belongs to the bacterial ribosomal protein bL32 family.

This Pasteurella multocida (strain Pm70) protein is Large ribosomal subunit protein bL32 (rpmF).